Consider the following 311-residue polypeptide: Malate dehydrogenase (311 aa).

Residues 10 to 15 and Asp35 each bind NAD(+); that span reads GAGRVG. Positions 84 and 90 each coordinate substrate. NAD(+) contacts are provided by residues Asn97 and 120-122; that span reads VTN. Substrate is bound by residues Asn122 and Arg153. His177 (proton acceptor) is an active-site residue.

This sequence belongs to the LDH/MDH superfamily. MDH type 3 family.

The enzyme catalyses (S)-malate + NAD(+) = oxaloacetate + NADH + H(+). In terms of biological role, catalyzes the reversible oxidation of malate to oxaloacetate. The protein is Malate dehydrogenase of Nitrosococcus oceani (strain ATCC 19707 / BCRC 17464 / JCM 30415 / NCIMB 11848 / C-107).